A 131-amino-acid polypeptide reads, in one-letter code: Holo-[acyl-carrier-protein] synthase (131 aa).

Asp-8 and Glu-59 together coordinate Mg(2+).

It belongs to the P-Pant transferase superfamily. AcpS family. Mg(2+) is required as a cofactor.

It is found in the cytoplasm. The enzyme catalyses apo-[ACP] + CoA = holo-[ACP] + adenosine 3',5'-bisphosphate + H(+). Transfers the 4'-phosphopantetheine moiety from coenzyme A to a Ser of acyl-carrier-protein. The polypeptide is Holo-[acyl-carrier-protein] synthase (Orientia tsutsugamushi (strain Boryong) (Rickettsia tsutsugamushi)).